The following is a 353-amino-acid chain: Photosystem II protein D1 (353 aa).

T2 is modified (N-acetylthreonine). At T2 the chain carries Phosphothreonine. The next 3 membrane-spanning stretches (helical) occupy residues Y29–S46, H118–L133, and W142–A156. Residue H118 coordinates chlorophyll a. Y126 contacts pheophytin a. [CaMn4O5] cluster-binding residues include D170 and E189. A helical membrane pass occupies residues F197–L218. H198 contributes to the chlorophyll a binding site. Residues H215 and S264–F265 each bind a quinone. Residue H215 participates in Fe cation binding. H272 provides a ligand contact to Fe cation. A helical transmembrane segment spans residues F274–L288. [CaMn4O5] cluster contacts are provided by H332, E333, D342, and A344. The propeptide occupies A345 to G353.

Belongs to the reaction center PufL/M/PsbA/D family. In terms of assembly, PSII is composed of 1 copy each of membrane proteins PsbA, PsbB, PsbC, PsbD, PsbE, PsbF, PsbH, PsbI, PsbJ, PsbK, PsbL, PsbM, PsbT, PsbX, PsbY, PsbZ, Psb30/Ycf12, at least 3 peripheral proteins of the oxygen-evolving complex and a large number of cofactors. It forms dimeric complexes. The cofactor is The D1/D2 heterodimer binds P680, chlorophylls that are the primary electron donor of PSII, and subsequent electron acceptors. It shares a non-heme iron and each subunit binds pheophytin, quinone, additional chlorophylls, carotenoids and lipids. D1 provides most of the ligands for the Mn4-Ca-O5 cluster of the oxygen-evolving complex (OEC). There is also a Cl(-1) ion associated with D1 and D2, which is required for oxygen evolution. The PSII complex binds additional chlorophylls, carotenoids and specific lipids.. Post-translationally, tyr-161 forms a radical intermediate that is referred to as redox-active TyrZ, YZ or Y-Z. C-terminally processed by CTPA; processing is essential to allow assembly of the oxygen-evolving complex and thus photosynthetic growth.

It is found in the plastid. Its subcellular location is the chloroplast thylakoid membrane. The enzyme catalyses 2 a plastoquinone + 4 hnu + 2 H2O = 2 a plastoquinol + O2. Its function is as follows. Photosystem II (PSII) is a light-driven water:plastoquinone oxidoreductase that uses light energy to abstract electrons from H(2)O, generating O(2) and a proton gradient subsequently used for ATP formation. It consists of a core antenna complex that captures photons, and an electron transfer chain that converts photonic excitation into a charge separation. The D1/D2 (PsbA/PsbD) reaction center heterodimer binds P680, the primary electron donor of PSII as well as several subsequent electron acceptors. The chain is Photosystem II protein D1 from Barbarea verna (Land cress).